A 423-amino-acid chain; its full sequence is Imidazolonepropionase (423 aa).

2 residues coordinate Fe(3+): His-78 and His-80. Positions 78 and 80 each coordinate Zn(2+). 3 residues coordinate 4-imidazolone-5-propanoate: Arg-87, Tyr-150, and His-183. Tyr-150 provides a ligand contact to N-formimidoyl-L-glutamate. His-247 provides a ligand contact to Fe(3+). His-247 lines the Zn(2+) pocket. Glu-250 contributes to the 4-imidazolone-5-propanoate binding site. A Fe(3+)-binding site is contributed by Asp-322. A Zn(2+)-binding site is contributed by Asp-322. N-formimidoyl-L-glutamate-binding residues include Asn-324 and Gly-326. Ser-327 is a 4-imidazolone-5-propanoate binding site.

Belongs to the metallo-dependent hydrolases superfamily. HutI family. The cofactor is Zn(2+). It depends on Fe(3+) as a cofactor.

Its subcellular location is the cytoplasm. It carries out the reaction 4-imidazolone-5-propanoate + H2O = N-formimidoyl-L-glutamate. Its pathway is amino-acid degradation; L-histidine degradation into L-glutamate; N-formimidoyl-L-glutamate from L-histidine: step 3/3. Catalyzes the hydrolytic cleavage of the carbon-nitrogen bond in imidazolone-5-propanoate to yield N-formimidoyl-L-glutamate. It is the third step in the universal histidine degradation pathway. The sequence is that of Imidazolonepropionase from Bacillus cereus (strain B4264).